Consider the following 266-residue polypeptide: GTP cyclohydrolase III (266 aa).

Belongs to the archaeal-type GTP cyclohydrolase family.

The catalysed reaction is GTP + 3 H2O = 2-amino-5-formylamino-6-(5-phospho-D-ribosylamino)pyrimidin-4(3H)-one + 2 phosphate + 2 H(+). Functionally, catalyzes the formation of 2-amino-5-formylamino-6-ribofuranosylamino-4(3H)-pyrimidinone ribonucleotide monophosphate and inorganic phosphate from GTP. Also has an independent pyrophosphate phosphohydrolase activity. This is GTP cyclohydrolase III from Methanococcus vannielii (strain ATCC 35089 / DSM 1224 / JCM 13029 / OCM 148 / SB).